Reading from the N-terminus, the 500-residue chain is Glycerol kinase (500 aa).

An ADP-binding site is contributed by T14. ATP is bound by residues T14, T15, and S16. Sn-glycerol 3-phosphate is bound at residue T14. Residue R18 participates in ADP binding. Residues R84, E85, and Y136 each coordinate sn-glycerol 3-phosphate. Residues R84, E85, and Y136 each contribute to the glycerol site. H232 bears the Phosphohistidine; by HPr mark. D246 lines the sn-glycerol 3-phosphate pocket. Residues D246 and Q247 each contribute to the glycerol site. T268 and G311 together coordinate ADP. T268, G311, Q315, and G412 together coordinate ATP. ADP contacts are provided by G412 and N416.

This sequence belongs to the FGGY kinase family. In terms of assembly, homotetramer and homodimer (in equilibrium). In terms of processing, the phosphoenolpyruvate-dependent sugar phosphotransferase system (PTS), including enzyme I, and histidine-containing protein (HPr) are required for the phosphorylation, which leads to the activation of the enzyme.

The enzyme catalyses glycerol + ATP = sn-glycerol 3-phosphate + ADP + H(+). The protein operates within polyol metabolism; glycerol degradation via glycerol kinase pathway; sn-glycerol 3-phosphate from glycerol: step 1/1. Activated by phosphorylation and inhibited by fructose 1,6-bisphosphate (FBP). Its function is as follows. Key enzyme in the regulation of glycerol uptake and metabolism. Catalyzes the phosphorylation of glycerol to yield sn-glycerol 3-phosphate. This Limosilactobacillus reuteri (strain DSM 20016) (Lactobacillus reuteri) protein is Glycerol kinase.